Consider the following 137-residue polypeptide: Small ribosomal subunit protein uS12 (137 aa).

The disordered stretch occupies residues 1–23; it reads MPTINQLVRKPRKSNATKSKSPA. D102 is modified (3-methylthioaspartic acid).

Belongs to the universal ribosomal protein uS12 family. In terms of assembly, part of the 30S ribosomal subunit. Contacts proteins S8 and S17. May interact with IF1 in the 30S initiation complex.

Its function is as follows. With S4 and S5 plays an important role in translational accuracy. In terms of biological role, interacts with and stabilizes bases of the 16S rRNA that are involved in tRNA selection in the A site and with the mRNA backbone. Located at the interface of the 30S and 50S subunits, it traverses the body of the 30S subunit contacting proteins on the other side and probably holding the rRNA structure together. The combined cluster of proteins S8, S12 and S17 appears to hold together the shoulder and platform of the 30S subunit. This Leuconostoc citreum (strain KM20) protein is Small ribosomal subunit protein uS12.